The primary structure comprises 215 residues: 7-methyl-GTP pyrophosphatase (215 aa).

Catalysis depends on D79, which acts as the Proton acceptor.

This sequence belongs to the Maf family. YceF subfamily. A divalent metal cation serves as cofactor.

The protein resides in the cytoplasm. It carries out the reaction N(7)-methyl-GTP + H2O = N(7)-methyl-GMP + diphosphate + H(+). In terms of biological role, nucleoside triphosphate pyrophosphatase that hydrolyzes 7-methyl-GTP (m(7)GTP). May have a dual role in cell division arrest and in preventing the incorporation of modified nucleotides into cellular nucleic acids. This Burkholderia mallei (strain ATCC 23344) protein is 7-methyl-GTP pyrophosphatase.